We begin with the raw amino-acid sequence, 160 residues long: uncharacterized protein (160 aa).

It localises to the plastid. This is an uncharacterized protein from Euglena longa (Euglenophycean alga).